Consider the following 260-residue polypeptide: Exosome complex component Rrp42 (260 aa).

It belongs to the RNase PH family. Rrp42 subfamily. In terms of assembly, component of the archaeal exosome complex. Forms a hexameric ring-like arrangement composed of 3 Rrp41-Rrp42 heterodimers. The hexameric ring associates with a trimer of Rrp4 and/or Csl4 subunits.

It is found in the cytoplasm. In terms of biological role, non-catalytic component of the exosome, which is a complex involved in RNA degradation. Contributes to the structuring of the Rrp41 active site. The polypeptide is Exosome complex component Rrp42 (Thermoplasma acidophilum (strain ATCC 25905 / DSM 1728 / JCM 9062 / NBRC 15155 / AMRC-C165)).